A 191-amino-acid polypeptide reads, in one-letter code: Pyridoxal 5'-phosphate synthase subunit PdxT (191 aa).

G46–S48 provides a ligand contact to L-glutamine. The active-site Nucleophile is the C78. L-glutamine is bound by residues R105 and I133 to R134. Catalysis depends on charge relay system residues H169 and E171.

Belongs to the glutaminase PdxT/SNO family. In the presence of PdxS, forms a dodecamer of heterodimers. Only shows activity in the heterodimer.

It catalyses the reaction aldehydo-D-ribose 5-phosphate + D-glyceraldehyde 3-phosphate + L-glutamine = pyridoxal 5'-phosphate + L-glutamate + phosphate + 3 H2O + H(+). The enzyme catalyses L-glutamine + H2O = L-glutamate + NH4(+). The protein operates within cofactor biosynthesis; pyridoxal 5'-phosphate biosynthesis. In terms of biological role, catalyzes the hydrolysis of glutamine to glutamate and ammonia as part of the biosynthesis of pyridoxal 5'-phosphate. The resulting ammonia molecule is channeled to the active site of PdxS. The protein is Pyridoxal 5'-phosphate synthase subunit PdxT of Brevibacillus brevis (strain 47 / JCM 6285 / NBRC 100599).